Consider the following 88-residue polypeptide: MSDFENLSGNDKELQEFLLIEKQKAQVNAQIHEFNEICWEKCIGKPSTKLDHATETCLSNCVDRFIDTSLLITQRFAQMLQKRGGGDL.

Positions 38 to 61 (CWEKCIGKPSTKLDHATETCLSNC) match the Twin CX3C motif motif. 2 disulfides stabilise this stretch: Cys38–Cys61 and Cys42–Cys57.

This sequence belongs to the small Tim family. In terms of assembly, heterohexamer; composed of 3 copies of Tim8 and 3 copies of Tim13, named soluble 70 kDa complex. Associates with the TIM22 complex, whose core is composed of Tim22.

The protein resides in the mitochondrion inner membrane. Its function is as follows. Mitochondrial intermembrane chaperone that participates in the import and insertion of some multi-pass transmembrane proteins into the mitochondrial inner membrane. Also required for the transfer of beta-barrel precursors from the TOM complex to the sorting and assembly machinery (SAM complex) of the outer membrane. Acts as a chaperone-like protein that protects the hydrophobic precursors from aggregation and guide them through the mitochondrial intermembrane space. The Tim8-Tim13 complex mediates the import of some proteins while the predominant Tim9-Tim10 70 kDa complex mediates the import of much more proteins. The polypeptide is Mitochondrial import inner membrane translocase subunit Tim8 (Tim8) (Drosophila melanogaster (Fruit fly)).